Reading from the N-terminus, the 459-residue chain is MQNNTTKSVKNNNVIELIDIVKQFDEKLVLDNVNLNIKRGEFVTLLGPSGSGKTTILRLIGGFEWATRGEIKFNGVDIKDLSPHKRNLSTIFQDYALFPHLNVEGNIMYGLKLKRVPKENVKKEHKNLLERKIKVWTEKAQREMKNLDKLQEEYENELKVLKPGTYKHQKRQTWLDDSDFKYSYWESYVLQKTEEFKNKYFKRKLTKEEIDQTVDKIVNLVGLQNNKNKKITELSGGMKQRVALARSLIIEPEILLLDEPLSALDAKIREKMQVFLKQIQQELKLTFIFVTHDQDEALELSDRIAVIREGKIEQYDTPKQIYDYPRNIWVAKFIGNSNIFNAKFLKDSKVELLNKEFKTIHDEDEFAVDEEVDALIRPEDIDIVNQTQNTEHKIKGKIVESIYRGSYYYIKVELKDSNYIFVETAKNFAVDETVYLSWTIDSIHLMKKDPKWDYAKKDF.

Residues Ile15 to Ile334 enclose the ABC transporter domain. Gly47–Thr54 serves as a coordination point for ATP. The tract at residues Arg115–Arg203 is insert.

Belongs to the ABC transporter superfamily. Spermidine/putrescine importer (TC 3.A.1.11.1) family. The complex is composed of two ATP-binding proteins (PotA), two transmembrane proteins (PotB and PotC) and a solute-binding protein (PotD).

Its subcellular location is the cell membrane. It carries out the reaction ATP + H2O + polyamine-[polyamine-binding protein]Side 1 = ADP + phosphate + polyamineSide 2 + [polyamine-binding protein]Side 1.. Functionally, part of the ABC transporter complex PotABCD involved in spermidine/putrescine import. Responsible for energy coupling to the transport system. The chain is Spermidine/putrescine import ATP-binding protein PotA from Mycoplasmopsis synoviae (strain 53) (Mycoplasma synoviae).